Reading from the N-terminus, the 208-residue chain is Uracil phosphoribosyltransferase (208 aa).

Residues R78, R103, and 130–138 (DPMLATGGS) each bind 5-phospho-alpha-D-ribose 1-diphosphate. Uracil contacts are provided by residues I193 and 198 to 200 (GDA). Position 199 (D199) interacts with 5-phospho-alpha-D-ribose 1-diphosphate.

Belongs to the UPRTase family. Mg(2+) serves as cofactor.

It carries out the reaction UMP + diphosphate = 5-phospho-alpha-D-ribose 1-diphosphate + uracil. It functions in the pathway pyrimidine metabolism; UMP biosynthesis via salvage pathway; UMP from uracil: step 1/1. Allosterically activated by GTP. Functionally, catalyzes the conversion of uracil and 5-phospho-alpha-D-ribose 1-diphosphate (PRPP) to UMP and diphosphate. The sequence is that of Uracil phosphoribosyltransferase from Shewanella halifaxensis (strain HAW-EB4).